A 362-amino-acid chain; its full sequence is MKTFLRHQLERYAQRLGELDFLLSREDIMSDMAQYRTISREHAEITQIAGRYERYKQREADIAGAAEMLEDPDMAEMAREEIAAAQAELVQLEEELQRLLLPKDPDDARNAFLEIRAGTGGDESALFAGDLLRMYTRYCERAGWRCEVVSESESELGGYKEVVIRIAGNDVFGRLRFESGGHRVQRVPATETQGRIHTSACTVAVLAEPDETVAVQINPADLRIDTYRASGAGGQHINKTDSAVRITHIPTGIVAECQDDRSQHRNKAKALQVLSARIQEKDRSERAAKDAAMRKGLIGSGDRSDRIRTYNFPQGRLTDHRINLTLYKLQAIMEGDLGDVLDALRAAREAEQLAELESSLPA.

Gln-235 carries the N5-methylglutamine modification.

The protein belongs to the prokaryotic/mitochondrial release factor family. Methylated by PrmC. Methylation increases the termination efficiency of RF1.

It localises to the cytoplasm. In terms of biological role, peptide chain release factor 1 directs the termination of translation in response to the peptide chain termination codons UAG and UAA. This chain is Peptide chain release factor 1, found in Variovorax paradoxus (strain S110).